The sequence spans 722 residues: Zinc finger BED domain-containing protein RICESLEEPER 1 (722 aa).

The BED-type zinc-finger motif lies at 66 to 126 (RKKSLVWEHF…GSCPKIKNQE (61 aa)). The Zn(2+) site is built by Cys-89, Cys-92, His-113, and Cys-119. The disordered stretch occupies residues 572-592 (VEQGGGNNAPASENSTQATAP). The segment covering 580–592 (APASENSTQATAP) has biased composition (polar residues). The interval 617-702 (ELEQYLDESL…EALVCAKDWL (86 aa)) is HATC (Hobo-Ac-Tam3) domain.

As to quaternary structure, homodimer.

Its subcellular location is the nucleus. Transposase-like protein that is essential for plant growth and development. May regulate global gene expression by recruiting other cellular factors. This chain is Zinc finger BED domain-containing protein RICESLEEPER 1, found in Oryza sativa subsp. japonica (Rice).